Reading from the N-terminus, the 74-residue chain is Cecropin-P2 (74 aa).

The signal sequence occupies residues 1 to 13 (MIFIYLLVQTAES). A propeptide spans 45–74 (RRRFVVQQDTISPRLEVDERFLPNSVQEQI) (removed in mature form).

It belongs to the cecropin family. As to expression, expressed in the body wall, intestine, uterus and ovary.

The protein resides in the secreted. Has antibacterial activity against several Gram-positive and Gram-negative bacteria. Is weakly active against yeasts. Acts by a nonpore mechanism. The chain is Cecropin-P2 (ASCEC-2) from Ascaris suum (Pig roundworm).